A 496-amino-acid chain; its full sequence is Angiopoietin-2 (496 aa).

The signal sequence occupies residues 1–18 (MWQLVFLTLSCDLAVATA). N-linked (GlcNAc...) asparagine glycosylation is found at Asn-90, Asn-120, Asn-134, Asn-152, Asn-241, and Asn-304. The stretch at 167-249 (STNKLEKQIL…VNNSVLQKQQ (83 aa)) forms a coiled coil. Residues 275–495 (KDEQIIFRDC…ATTMMIRPAD (221 aa)) form the Fibrinogen C-terminal domain. Cys-284 and Cys-313 are joined by a disulfide. Ca(2+)-binding residues include Asp-429, Asp-431, Cys-433, and Cys-435. 2 disulfide bridges follow: Cys-433/Cys-435 and Cys-437/Cys-450.

In terms of assembly, interacts with TEK/TIE2, competing for the same binding site as ANGPT1. Interacts with ITGA5. Interacts with SVEP1/polydom. Interacts with THBD; this interaction significantly inhibits the generation of activated PC and TAFIa/CPB2 by the thrombin/thrombomodulin complex.

It is found in the secreted. Its function is as follows. Binds to TEK/TIE2, competing for the ANGPT1 binding site, and modulating ANGPT1 signaling. Can induce tyrosine phosphorylation of TEK/TIE2 in the absence of ANGPT1. In the absence of angiogenic inducers, such as VEGF, ANGPT2-mediated loosening of cell-matrix contacts may induce endothelial cell apoptosis with consequent vascular regression. In concert with VEGF, it may facilitate endothelial cell migration and proliferation, thus serving as a permissive angiogenic signal. Involved in the regulation of lymphangiogenesis. The polypeptide is Angiopoietin-2 (ANGPT2) (Bos taurus (Bovine)).